We begin with the raw amino-acid sequence, 383 residues long: 8-amino-7-oxononanoate synthase (383 aa).

A substrate-binding site is contributed by Arg-22. 109–110 (GF) provides a ligand contact to pyridoxal 5'-phosphate. His-134 lines the substrate pocket. The pyridoxal 5'-phosphate site is built by Ser-178, His-206, and Thr-232. N6-(pyridoxal phosphate)lysine is present on Lys-235. Thr-348 is a substrate binding site.

This sequence belongs to the class-II pyridoxal-phosphate-dependent aminotransferase family. BioF subfamily. In terms of assembly, homodimer. The cofactor is pyridoxal 5'-phosphate.

It catalyses the reaction 6-carboxyhexanoyl-[ACP] + L-alanine + H(+) = (8S)-8-amino-7-oxononanoate + holo-[ACP] + CO2. The protein operates within cofactor biosynthesis; biotin biosynthesis. Functionally, catalyzes the decarboxylative condensation of pimeloyl-[acyl-carrier protein] and L-alanine to produce 8-amino-7-oxononanoate (AON), [acyl-carrier protein], and carbon dioxide. This Vibrio parahaemolyticus serotype O3:K6 (strain RIMD 2210633) protein is 8-amino-7-oxononanoate synthase.